The chain runs to 357 residues: MDSGLSTPQLPITNMNNEITTDWDKAMNLIMTCVSGHIHSRMFNIVMKLNICDILEDGPKSIKQVSDTIGMDENSCFRLLRYFVAHELFSEDKSNIGTFEKTSISTMFSSKGKLRPMGERYTHDLHYKMFESLPETFANGHSNATKSVGVNHFWELFDLHPQYKDLFNQTMKVYTEAAISNITQSKGIDFSQYDTVVDIGGNHGLLIGNLLEIYPTIKHGINFDLDVVINSSDQTLRYSHPRLTHIPGNFFESVPESDCYIMKFILHDWPTQDCVKILKTISKSMKPNAKIHLFEIIIDPRKGYSKYETYIDILMFQMVNAKERTLDEWKELFELADFKLERVVDDIKTGCMVVSKK.

Residues Gly200, Asp224, Asn249, Phe250, and Lys263 each coordinate S-adenosyl-L-methionine. His267 serves as the catalytic Proton acceptor.

The protein belongs to the class I-like SAM-binding methyltransferase superfamily. Cation-independent O-methyltransferase family. COMT subfamily.

It catalyses the reaction (3,5-dichloro-2,4,6-trihydroxyphenyl)hexan-1-one + S-adenosyl-L-methionine = 1-(3,5-dichloro-2,6-dihydroxy-4-methoxyphenyl)hexan-1-one + S-adenosyl-L-homocysteine + H(+). This is O-methyltransferase 9 (omt9) from Dictyostelium discoideum (Social amoeba).